Reading from the N-terminus, the 481-residue chain is Delta(14)-sterol reductase ERG24B (481 aa).

8 helical membrane-spanning segments follow: residues 11–31, 80–100, 125–145, 149–169, 244–264, 279–299, 313–333, and 427–447; these read FGGP…MQVL, LFAY…QIVL, LTGC…WTWI, YIQL…WTYL, TYGF…YYVL, ITSD…VPFL, HLGP…LYIF, and AAPW…FLLI.

It belongs to the ERG4/ERG24 family.

It is found in the endoplasmic reticulum membrane. It catalyses the reaction 4,4-dimethyl-5alpha-cholesta-8,24-dien-3beta-ol + NADP(+) = 4,4-dimethyl-5alpha-cholesta-8,14,24-trien-3beta-ol + NADPH + H(+). It participates in steroid metabolism; ergosterol biosynthesis. Its function is as follows. Delta(14)-sterol reductase; part of the third module of ergosterol biosynthesis pathway that includes the late steps of the pathway. Catalyzes the reduction of the C14=C15 double bond within 4,4,24-trimethyl ergosta-8,14,24(28)-trienolto produce 4,4-dimethylfecosterol. The third module or late pathway involves the ergosterol synthesis itself through consecutive reactions that mainly occur in the endoplasmic reticulum (ER) membrane. Firstly, the squalene synthase ERG9 catalyzes the condensation of 2 farnesyl pyrophosphate moieties to form squalene, which is the precursor of all steroids. Squalene synthase is crucial for balancing the incorporation of farnesyl diphosphate (FPP) into sterol and nonsterol isoprene synthesis. Secondly, squalene is converted into lanosterol by the consecutive action of the squalene epoxidase ERG1 and the lanosterol synthase ERG7. Then, the delta(24)-sterol C-methyltransferase ERG6 methylates lanosterol at C-24 to produce eburicol. Eburicol is the substrate of the sterol 14-alpha demethylase encoded by CYP51A, CYP51B and CYP51C, to yield 4,4,24-trimethyl ergosta-8,14,24(28)-trienol. CYP51B encodes the enzyme primarily responsible for sterol 14-alpha-demethylation, and plays an essential role in ascospore formation. CYP51A encodes an additional sterol 14-alpha-demethylase, induced on ergosterol depletion and responsible for the intrinsic variation in azole sensitivity. The third CYP51 isoform, CYP51C, does not encode a sterol 14-alpha-demethylase, but is required for full virulence on host wheat ears. The C-14 reductase ERG24 then reduces the C14=C15 double bond which leads to 4,4-dimethylfecosterol. A sequence of further demethylations at C-4, involving the C-4 demethylation complex containing the C-4 methylsterol oxidases ERG25, the sterol-4-alpha-carboxylate 3-dehydrogenase ERG26 and the 3-keto-steroid reductase ERG27, leads to the production of fecosterol via 4-methylfecosterol. ERG28 has a role as a scaffold to help anchor ERG25, ERG26 and ERG27 to the endoplasmic reticulum. The C-8 sterol isomerase ERG2 then catalyzes the reaction which results in unsaturation at C-7 in the B ring of sterols and thus converts fecosterol to episterol. The sterol-C5-desaturases ERG3A and ERG3BB then catalyze the introduction of a C-5 double bond in the B ring to produce 5-dehydroepisterol. The C-22 sterol desaturases ERG5A and ERG5B further convert 5-dehydroepisterol into ergosta-5,7,22,24(28)-tetraen-3beta-ol by forming the C-22(23) double bond in the sterol side chain. Finally, ergosta-5,7,22,24(28)-tetraen-3beta-ol is substrate of the C-24(28) sterol reductase ERG4 to produce ergosterol. This Gibberella zeae (strain ATCC MYA-4620 / CBS 123657 / FGSC 9075 / NRRL 31084 / PH-1) (Wheat head blight fungus) protein is Delta(14)-sterol reductase ERG24B.